A 233-amino-acid chain; its full sequence is ATP synthase subunit C lysine N-methyltransferase (233 aa).

Methionine 1 bears the N-acetylmethionine mark. A helical membrane pass occupies residues 38–58 (FLLTGLVGGTLVAVYAVATPF). The required for mitochondrial location stretch occupies residues 56 to 90 (TPFVTPALRKVCLPFVPATTKQIENVVKMLRCRRG).

The protein belongs to the ANT/ATPSC lysine N-methyltransferase family. As to expression, ubiquitously expressed.

The protein localises to the mitochondrion membrane. It catalyses the reaction L-lysyl-[protein] + 3 S-adenosyl-L-methionine = N(6),N(6),N(6)-trimethyl-L-lysyl-[protein] + 3 S-adenosyl-L-homocysteine + 3 H(+). Its function is as follows. Mitochondrial protein-lysine N-methyltransferase that trimethylates ATP synthase subunit C, ATP5MC1 and ATP5MC2. Trimethylation is required for proper incorporation of the C subunit into the ATP synthase complex and mitochondrial respiration. Promotes chronic pain. Involved in persistent inflammatory and neuropathic pain: methyltransferase activity in the mitochondria of sensory neurons promotes chronic pain via a pathway that depends on the production of reactive oxygen species (ROS) and on the engagement of spinal cord microglia. The protein is ATP synthase subunit C lysine N-methyltransferase of Homo sapiens (Human).